We begin with the raw amino-acid sequence, 81 residues long: Protein Vpu (81 aa).

The Extracellular segment spans residues 1-7; sequence MQPLQIL. A helical membrane pass occupies residues 8–28; sequence AIVALVVAAIIAIVVWTIVYI. The Cytoplasmic segment spans residues 29–81; it reads EYRKILRQRKIDRLIDRITERAEDSGNESEGDQEELSALVERGHLAPWDVDDL. Positions 50–81 are disordered; it reads AEDSGNESEGDQEELSALVERGHLAPWDVDDL. A phosphoserine; by host CK2 mark is found at Ser-53 and Ser-57. The span at 53–63 shows a compositional bias: acidic residues; sequence SGNESEGDQEE.

The protein belongs to the HIV-1 VPU protein family. Homopentamer. Interacts with host CD4 and BRTC; these interactions induce proteasomal degradation of CD4. Interacts with host BST2; this interaction leads to the degradation of host BST2. Interacts with host FBXW11. Interacts with host AP1M1; this interaction plays a role in the mistrafficking and subsequent degradation of host BST2. Interacts with host RANBP2; this interaction allows Vpu to down-regulate host BLM sumoylation. Phosphorylated by host CK2. This phosphorylation is necessary for interaction with human BTRC and degradation of CD4.

The protein resides in the host membrane. With respect to regulation, ion channel activity is inhibited by hexamethylene amiloride in vitro. Its function is as follows. Enhances virion budding by targeting host CD4 and Tetherin/BST2 to proteasome degradation. Degradation of CD4 prevents any unwanted premature interactions between viral Env and its host receptor CD4 in the endoplasmic reticulum. Degradation of antiretroviral protein Tetherin/BST2 is important for virion budding, as BST2 tethers new viral particles to the host cell membrane. Mechanistically, Vpu bridges either CD4 or BST2 to BTRC, a substrate recognition subunit of the Skp1/Cullin/F-box protein E3 ubiquitin ligase, induces their ubiquitination and subsequent proteasomal degradation. The alteration of the E3 ligase specificity by Vpu seems to promote the degradation of host IKBKB, leading to NF-kappa-B down-regulation and subsequent apoptosis. Acts as a viroporin that forms an oligomeric ion channel in membranes. Modulates the host DNA repair mechanisms to promote degradation of nuclear viral cDNA in cells that are already productively infected in order to suppress immune sensing and proviral hyper-integration (superinfection). Manipulates PML-NBs and modulates SUMOylation of host BLM protein thereby enhancing its DNA-end processing activity toward viral unintegrated linear DNA. Also inhibits RAD52-mediated homologous repair of viral cDNA, preventing the generation of dead-end circular forms of single copies of the long terminal repeat and permitting sustained nucleolytic attack. This chain is Protein Vpu, found in Human immunodeficiency virus type 1 group M subtype B (isolate SF162) (HIV-1).